A 208-amino-acid chain; its full sequence is Thymidylate kinase (208 aa).

9–16 is a binding site for ATP; it reads GGEGCGKS.

It belongs to the thymidylate kinase family.

It catalyses the reaction dTMP + ATP = dTDP + ADP. Its function is as follows. Phosphorylation of dTMP to form dTDP in both de novo and salvage pathways of dTTP synthesis. The protein is Thymidylate kinase of Dehalococcoides mccartyi (strain CBDB1).